We begin with the raw amino-acid sequence, 108 residues long: Acid stress chaperone HdeB (108 aa).

A signal peptide spans M1 to A29. K93 carries the N6-acetyllysine modification.

The protein belongs to the HdeB family.

Its subcellular location is the periplasm. Its function is as follows. Required for optimal acid stress protection, which is important for survival of enteric bacteria in the acidic environment of the host stomach. Exhibits a chaperone-like activity at acidic pH by preventing the aggregation of many different periplasmic proteins. In Escherichia coli O6:H1 (strain CFT073 / ATCC 700928 / UPEC), this protein is Acid stress chaperone HdeB.